We begin with the raw amino-acid sequence, 200 residues long: Pyridoxal 5'-phosphate synthase subunit PdxT (200 aa).

52 to 54 contributes to the L-glutamine binding site; sequence GES. Cys84 acts as the Nucleophile in catalysis. L-glutamine contacts are provided by residues Arg116 and 145–146; that span reads IR. Catalysis depends on charge relay system residues His181 and Glu183.

The protein belongs to the glutaminase PdxT/SNO family. As to quaternary structure, in the presence of PdxS, forms a dodecamer of heterodimers. Only shows activity in the heterodimer.

The enzyme catalyses aldehydo-D-ribose 5-phosphate + D-glyceraldehyde 3-phosphate + L-glutamine = pyridoxal 5'-phosphate + L-glutamate + phosphate + 3 H2O + H(+). It carries out the reaction L-glutamine + H2O = L-glutamate + NH4(+). It functions in the pathway cofactor biosynthesis; pyridoxal 5'-phosphate biosynthesis. Its function is as follows. Catalyzes the hydrolysis of glutamine to glutamate and ammonia as part of the biosynthesis of pyridoxal 5'-phosphate. The resulting ammonia molecule is channeled to the active site of PdxS. The chain is Pyridoxal 5'-phosphate synthase subunit PdxT from Sulfolobus acidocaldarius (strain ATCC 33909 / DSM 639 / JCM 8929 / NBRC 15157 / NCIMB 11770).